Reading from the N-terminus, the 296-residue chain is Phosphatidylglycerol--prolipoprotein diacylglyceryl transferase (296 aa).

Residues 1–21 (MRHRRRPGGRSTAGGTPVSQL) form a disordered region. 7 consecutive transmembrane segments (helical) span residues 34–54 (GPLT…VAYI), 72–92 (ELCA…HVIT), 108–128 (FFIW…GLAI), 136–158 (GIRF…AIGR), 195–215 (FHPT…FLLW), 227–243 (LFTL…FWVE), and 258–278 (LNDV…IVLQ). Residue Arg158 participates in a 1,2-diacyl-sn-glycero-3-phospho-(1'-sn-glycerol) binding.

The protein belongs to the Lgt family.

It localises to the cell membrane. It carries out the reaction L-cysteinyl-[prolipoprotein] + a 1,2-diacyl-sn-glycero-3-phospho-(1'-sn-glycerol) = an S-1,2-diacyl-sn-glyceryl-L-cysteinyl-[prolipoprotein] + sn-glycerol 1-phosphate + H(+). It participates in protein modification; lipoprotein biosynthesis (diacylglyceryl transfer). Catalyzes the transfer of the diacylglyceryl group from phosphatidylglycerol to the sulfhydryl group of the N-terminal cysteine of a prolipoprotein, the first step in the formation of mature lipoproteins. This is Phosphatidylglycerol--prolipoprotein diacylglyceryl transferase from Cutibacterium acnes (strain DSM 16379 / KPA171202) (Propionibacterium acnes).